The primary structure comprises 267 residues: MKGTYYINHGDPLMYLKKHIKLRQFLEGWQENVVIEKPKSILIISAHWDTNVPTVNFVEHCDTIHDFDDYPDPLYQIQYRAPGAPNLAKKVEELLKESGMECEIDTKRGLDHAAWFPLMFMYPEANIPICELSVQPSKDGIHHYNVGKALSPLLQQGVLIIGSGGTVHPSDDTPHCPNGVAPWAIEFDNWLEDALLSGRYEDVNNFKKLAPNWEISHPGQEHLYPLHVALGAAGKNPKTQLIHRSWAANGVFGYSTYNFTPTTQKTD.

Zn(2+) is bound by residues histidine 9, histidine 47, histidine 168, and histidine 222.

This sequence belongs to the DODA-type extradiol aromatic ring-opening dioxygenase family. Zn(2+) is required as a cofactor. Fe(2+) serves as cofactor. As to expression, expressed in petals. Not detected in leaves, stems and roots.

Its subcellular location is the cytoplasm. The catalysed reaction is L-dopa + O2 = 4-(L-alanin-3-yl)-2-hydroxy-cis,cis-muconate 6-semialdehyde + H(+). It participates in pigment biosynthesis; betalain biosynthesis. In terms of biological role, opens the cyclic ring of dihydroxy-phenylalanine (DOPA) between carbons 4 and 5, thus producing an unstable seco-DOPA that rearranges nonenzymatically to betalamic acid. Produces mainly (S)-betalamic acid. Required for the coloration of flowers. This chain is 4,5-DOPA dioxygenase extradiol (DOD), found in Mirabilis jalapa (Garden four-o'clock).